Here is a 182-residue protein sequence, read N- to C-terminus: uncharacterized protein (182 aa).

One can recognise a Macro domain in the interval 1–177 (MEFSVGGVEV…KFLEVFKKHL (177 aa)).

This is an uncharacterized protein from Pyrobaculum aerophilum (strain ATCC 51768 / DSM 7523 / JCM 9630 / CIP 104966 / NBRC 100827 / IM2).